The sequence spans 404 residues: Multidrug resistance protein MdtG (404 aa).

The next 11 helical transmembrane spans lie at 19-39 (LGCF…PLYV), 56-76 (LVFS…GGLA), 90-110 (LGMA…QFLI), 113-133 (ALLG…ATQV), 144-164 (TLST…GLLA), 171-191 (PVFF…FFFI), 222-242 (LFVT…ILTL), 254-274 (IAFI…LSAP), 288-308 (ILIV…FVQT), 317-337 (FLLG…LVYN), and 376-396 (AVFC…WNSL).

This sequence belongs to the major facilitator superfamily. DHA1 family. MdtG (TC 2.A.1.2.20) subfamily.

It localises to the cell inner membrane. This chain is Multidrug resistance protein MdtG, found in Salmonella arizonae (strain ATCC BAA-731 / CDC346-86 / RSK2980).